The sequence spans 266 residues: Type III pantothenate kinase (266 aa).

6–13 (DVGNSHTV) provides a ligand contact to ATP. Residue 112–115 (GIDR) participates in substrate binding. Catalysis depends on D114, which acts as the Proton acceptor. Residue D134 participates in K(+) binding. T137 provides a ligand contact to ATP. T190 provides a ligand contact to substrate.

It belongs to the type III pantothenate kinase family. In terms of assembly, homodimer. The cofactor is NH4(+). K(+) serves as cofactor.

It localises to the cytoplasm. It catalyses the reaction (R)-pantothenate + ATP = (R)-4'-phosphopantothenate + ADP + H(+). It functions in the pathway cofactor biosynthesis; coenzyme A biosynthesis; CoA from (R)-pantothenate: step 1/5. Functionally, catalyzes the phosphorylation of pantothenate (Pan), the first step in CoA biosynthesis. The polypeptide is Type III pantothenate kinase (Desulfotalea psychrophila (strain LSv54 / DSM 12343)).